The sequence spans 754 residues: tRNA(Met) cytidine acetyltransferase TmcA (754 aa).

Positions 181 to 202 (GISFDAAPPRVPTEKDRRSPRR) are disordered. Positions 192 to 202 (PTEKDRRSPRR) are enriched in basic and acidic residues. Residues glutamine 212, 236–245 (GRGKSSAAGL), and arginine 383 each bind ATP. The 186-residue stretch at 418–603 (VSYRALSPDD…YSALMTRPLS (186 aa)) folds into the N-acetyltransferase domain. Acetyl-CoA contacts are provided by residues 529-531 (IAT), 536-542 (RSSGLGS), and glutamate 568.

The protein belongs to the RNA cytidine acetyltransferase family. TmcA subfamily.

Its subcellular location is the cytoplasm. The enzyme catalyses cytidine(34) in elongator tRNA(Met) + acetyl-CoA + ATP + H2O = N(4)-acetylcytidine(34) in elongator tRNA(Met) + ADP + phosphate + CoA + H(+). Its function is as follows. Catalyzes the formation of N(4)-acetylcytidine (ac(4)C) at the wobble position of tRNA(Met), by using acetyl-CoA as an acetyl donor and ATP (or GTP). The protein is tRNA(Met) cytidine acetyltransferase TmcA of Haloferax volcanii (strain ATCC 29605 / DSM 3757 / JCM 8879 / NBRC 14742 / NCIMB 2012 / VKM B-1768 / DS2) (Halobacterium volcanii).